We begin with the raw amino-acid sequence, 646 residues long: Lipoteichoic acid synthase (646 aa).

At 1 to 7 the chain is on the cytoplasmic side; it reads MSLPKKK. A helical transmembrane segment spans residues 8-28; it reads IGIFAFFLLTVFTITLKTYFS. Residues 29 to 43 are Extracellular-facing; sequence YYVDFSLGVKGLVQN. The chain crosses the membrane as a helical span at residues 44 to 64; that stretch reads LILIMNPYSLIALVLSVFLFF. Residues 65-68 are Cytoplasmic-facing; that stretch reads KGKK. The helical transmembrane segment at 69 to 89 threads the bilayer; the sequence is AFWFIFIGGFLLTFLLYANVV. Residues 90–119 lie on the Extracellular side of the membrane; that stretch reads YFRFFSDFLTFSTLNQAGNVESMGGAVSAS. A helical transmembrane segment spans residues 120–140; that stretch reads FKWYDFVYFIDTIIYLAILIF. The Cytoplasmic segment spans residues 141-153; that stretch reads KRKWLDNRAFSKK. The helical transmembrane segment at 154-174 threads the bilayer; that stretch reads FVPVVMATSVALFFLNLAFAE. Residues 175–646 lie on the Extracellular side of the membrane; the sequence is TDRPELLTRT…KSGPKGNEKK (472 aa). The Mn(2+) site is built by glutamate 255 and threonine 300. Residue threonine 300 is part of the active site. Position 416 (histidine 416) interacts with substrate. Mn(2+) contacts are provided by aspartate 475 and histidine 476.

This sequence belongs to the LTA synthase family. Post-translationally, proteolytically cleaved.

Its subcellular location is the cell membrane. It is found in the secreted. Its pathway is cell wall biogenesis; lipoteichoic acid biosynthesis. Its function is as follows. Catalyzes the polymerization of lipoteichoic acid (LTA) polyglycerol phosphate, a reaction that presumably uses phosphatidylglycerol (PG) as substrate. Is required for staphylococcal growth and cell division process. The polypeptide is Lipoteichoic acid synthase (ltaS) (Staphylococcus epidermidis (strain ATCC 12228 / FDA PCI 1200)).